A 161-amino-acid polypeptide reads, in one-letter code: Cyclic pyranopterin monophosphate synthase (161 aa).

Substrate-binding positions include 75–77 (MCH) and 115–116 (ME). D130 is an active-site residue.

This sequence belongs to the MoaC family. Homohexamer; trimer of dimers.

It carries out the reaction (8S)-3',8-cyclo-7,8-dihydroguanosine 5'-triphosphate = cyclic pyranopterin phosphate + diphosphate. The protein operates within cofactor biosynthesis; molybdopterin biosynthesis. In terms of biological role, catalyzes the conversion of (8S)-3',8-cyclo-7,8-dihydroguanosine 5'-triphosphate to cyclic pyranopterin monophosphate (cPMP). This is Cyclic pyranopterin monophosphate synthase from Bacillus thuringiensis subsp. konkukian (strain 97-27).